Consider the following 840-residue polypeptide: N-acetyltransferase ESCO1 (840 aa).

Residues 1–25 (MMSIQEKSKENSSKVTKKSDDKNSE) are compositionally biased toward basic and acidic residues. Residues 1 to 188 (MMSIQEKSKE…VLEVKSDSKE (188 aa)) are disordered. 3 stretches are compositionally biased toward polar residues: residues 46 to 58 (KSQA…SKIN), 65 to 74 (RMSTRSSKAA), and 81 to 96 (KSIN…YSQE). Over residues 131–140 (VSRRSLRSRE) the composition is skewed to basic and acidic residues. Residues 141–153 (IQGQVQAVKQSLP) show a composition bias toward polar residues. The segment covering 161 to 170 (SSTQSKSNKT) has biased composition (low complexity). A compositionally biased stretch (basic and acidic residues) spans 178–188 (KVLEVKSDSKE). S200 is modified (phosphoserine). Disordered stretches follow at residues 221–300 (TQGS…KSKR) and 318–338 (NVEV…KPTE). Residues 267 to 278 (HTQVNTNTTLPK) show a composition bias toward polar residues. Residues 319–338 (VEVKKESSQMESVKEEKPTE) show a composition bias toward basic and acidic residues. A Glycyl lysine isopeptide (Lys-Gly) (interchain with G-Cter in SUMO2) cross-link involves residue K332. A Phosphoserine modification is found at S412. 2 disordered regions span residues 486–505 (ANEI…HSFD) and 542–582 (TGEN…KCNS). Positions 551 to 565 (APQQHSILSNQTSKS) are enriched in polar residues. The segment at 617–641 (VSCNVCGMLYTASNPEDETQHLLFH) adopts a CCHH-type zinc-finger fold. Acetyl-CoA-binding positions include 772-774 (IWV), 780-785 (RKKIAS), and 812-814 (TPD).

It belongs to the acetyltransferase family. ECO subfamily. As to quaternary structure, the subunit structure is controversial. Monomer. Homodimer. Phosphorylated during mitosis, when associated with chromosomes. As to expression, widely expressed. Expressed in heart, brain, liver, placenta, lung, kidney and pancreas. Highly expressed in muscle.

The protein localises to the nucleus. Its subcellular location is the chromosome. It catalyses the reaction L-lysyl-[protein] + acetyl-CoA = N(6)-acetyl-L-lysyl-[protein] + CoA + H(+). Its function is as follows. Acetyltransferase required for the establishment of sister chromatid cohesion. Couples the processes of cohesion and DNA replication to ensure that only sister chromatids become paired together. In contrast to the structural cohesins, the deposition and establishment factors are required only during S phase. Acts by mediating the acetylation of cohesin component SMC3. This is N-acetyltransferase ESCO1 (ESCO1) from Homo sapiens (Human).